The chain runs to 64 residues: MVFVKVRDAEHLEEALKRFKRECEKNGILKEIKRRETYMPPSVKRKIKSQEAQRRMRRTKRKRF.

The interval 40-64 (PPSVKRKIKSQEAQRRMRRTKRKRF) is disordered. The span at 55 to 64 (RMRRTKRKRF) shows a compositional bias: basic residues.

The protein belongs to the bacterial ribosomal protein bS21 family.

This is Small ribosomal subunit protein bS21 from Elusimicrobium minutum (strain Pei191).